The following is a 354-amino-acid chain: Glutamine synthetase (354 aa).

Residues 22–101 (FHAEYVWIDG…VLSETYNNDG (80 aa)) form the GS beta-grasp domain. Residues 108–354 (HRHHTAKVME…IIIETTILDK (247 aa)) enclose the GS catalytic domain.

It belongs to the glutamine synthetase family. Homooctamer.

The protein localises to the cytoplasm. It carries out the reaction L-glutamate + NH4(+) + ATP = L-glutamine + ADP + phosphate + H(+). In Amanita muscaria (Fly agaric), this protein is Glutamine synthetase (GLN1).